The following is a 423-amino-acid chain: 26S proteasome regulatory subunit 6A-A (423 aa).

211–218 provides a ligand contact to ATP; sequence GPPGTGKT.

Belongs to the AAA ATPase family. In terms of assembly, may form a heterodimer with a related family member.

It is found in the cytoplasm. The protein resides in the nucleus. Its function is as follows. The 26S proteasome is involved in the ATP-dependent degradation of ubiquitinated proteins. The regulatory (or ATPase) complex confers ATP dependency and substrate specificity to the 26S complex. The protein is 26S proteasome regulatory subunit 6A-A of Xenopus laevis (African clawed frog).